Here is a 735-residue protein sequence, read N- to C-terminus: Muskelin (735 aa).

N-acetylalanine is present on Ala2. In terms of domain architecture, LisH spans Arg172–Leu204. In terms of domain architecture, CTLH spans His206 to Ser258. Kelch repeat units lie at residues Thr284–Lys330, Gln339–Gln391, Met400–Gly458, Cys469–Thr515, Glu526–Glu578, and Val597–Asp651.

Homodimer; may form higher oligomers. Identified in the CTLH complex that contains GID4, RANBP9 and/or RANBP10, MKLN1, MAEA, RMND5A (or alternatively its paralog RMND5B), GID8, ARMC8, WDR26 and YPEL5. Within this complex, MAEA, RMND5A (or alternatively its paralog RMND5B), GID8, WDR26, and RANBP9 and/or RANBP10 form the catalytic core, while GID4, MKLN1, ARMC8 and YPEL5 have ancillary roles. Interacts with RANBP9. Part of a complex consisting of RANBP9, MKLN1 and GID8. Interacts with GABRA1. Interacts with the C-terminal tail of PTGER3.

Its subcellular location is the cytoplasm. The protein localises to the cell projection. The protein resides in the ruffle. It is found in the cell cortex. It localises to the synapse. Its subcellular location is the postsynapse. Component of the CTLH E3 ubiquitin-protein ligase complex that selectively accepts ubiquitin from UBE2H and mediates ubiquitination and subsequent proteasomal degradation of the transcription factor HBP1. Required for internalization of the GABA receptor GABRA1 from the cell membrane via endosomes and subsequent GABRA1 degradation. Acts as a mediator of cell spreading and cytoskeletal responses to the extracellular matrix component THBS1. This is Muskelin (Mkln1) from Rattus norvegicus (Rat).